Reading from the N-terminus, the 335-residue chain is Fructose-1,6-bisphosphatase class 1 (335 aa).

Residues Glu90, Asp113, Leu115, and Asp116 each coordinate Mg(2+). Residues Asp116–Ser119, Asn209, Tyr242, and Lys272 contribute to the substrate site. Glu278 contributes to the Mg(2+) binding site.

This sequence belongs to the FBPase class 1 family. In terms of assembly, homotetramer. The cofactor is Mg(2+).

The protein localises to the cytoplasm. It catalyses the reaction beta-D-fructose 1,6-bisphosphate + H2O = beta-D-fructose 6-phosphate + phosphate. It functions in the pathway carbohydrate biosynthesis; gluconeogenesis. The polypeptide is Fructose-1,6-bisphosphatase class 1 (Mannheimia succiniciproducens (strain KCTC 0769BP / MBEL55E)).